We begin with the raw amino-acid sequence, 440 residues long: MFLAQEIIRKKRDGHALSDEEIRFFINGIRDNTISEGQIAALAMTIFFHDMTMPERVSLTMAMRDSGTVLDWKSLNLNGPIVDKHSTGGVGDVTSLMLGPMVAACGGYVPMISGRGLGHTGGTLDKLEAIPGFDIFPDDNRFREIIQDVGVAIIGQTSSLAPADKRFYATRDITATVDSIPLITGSILAKKLAEGLDALVMDVKVGSGAFMPTYELSEALAEAIVGVANGAGVRTTALLTDMNQVLASSAGNAVEVREAVQFLTGEYRNPRLFDVTMALCVEMLISGQLAKDDAEARTKLQAVLDNGKAAEVFGRMVAAQKGPSDFVENYDKYLPTAMLSKAVYADTEGFISAMDTRALGMAVVSMGGGRRQASDTIDYSVGFTDMARLGDSIDGQRPLAVIHAKDEASWQEAAKAVKAAIILDDKAPVSTPSVYRRITE.

Belongs to the thymidine/pyrimidine-nucleoside phosphorylase family. Homodimer.

The enzyme catalyses thymidine + phosphate = 2-deoxy-alpha-D-ribose 1-phosphate + thymine. It participates in pyrimidine metabolism; dTMP biosynthesis via salvage pathway; dTMP from thymine: step 1/2. The enzymes which catalyze the reversible phosphorolysis of pyrimidine nucleosides are involved in the degradation of these compounds and in their utilization as carbon and energy sources, or in the rescue of pyrimidine bases for nucleotide synthesis. This is Thymidine phosphorylase from Salmonella choleraesuis (strain SC-B67).